A 638-amino-acid polypeptide reads, in one-letter code: Nitrous-oxide reductase (638 aa).

A signal peptide (tat-type signal) is located at residues 1–52; that stretch reads MSDKDSKNTPQVPEKLGLSRRGFLGASAVTGAAVAATALGGAVMTRESWAQA. His129, His130, and His178 together coordinate Cu cation. Residues Tyr256, Glu259, Met267, Asp273, and Asn324 each contribute to the Ca(2+) site. Cu cation-binding residues include His326, His382, and His433. Ca(2+) contacts are provided by Lys454 and Glu469. Cu cation-binding residues include His494, His583, Cys618, Trp620, Cys622, His626, and Met629. The interval 542–638 is COX2-like; it reads NKVRVYMTSM…MVGRMMVEPA (97 aa).

It belongs to the NosZ family. This sequence in the C-terminal section; belongs to the cytochrome c oxidase subunit 2 family. As to quaternary structure, homodimer. Ca(2+) is required as a cofactor. It depends on Cu cation as a cofactor. Predicted to be exported by the Tat system. The position of the signal peptide cleavage has not been experimentally proven. In terms of processing, the N-terminus is blocked.

The protein resides in the periplasm. The catalysed reaction is N2 + 2 Fe(III)-[cytochrome c] + H2O = nitrous oxide + 2 Fe(II)-[cytochrome c] + 2 H(+). The protein operates within nitrogen metabolism; nitrate reduction (denitrification); dinitrogen from nitrate: step 4/4. Functionally, nitrous-oxide reductase is part of a bacterial respiratory system which is activated under anaerobic conditions in the presence of nitrate or nitrous oxide. This chain is Nitrous-oxide reductase (nosZ), found in Stutzerimonas stutzeri (Pseudomonas stutzeri).